The following is a 332-amino-acid chain: MKVAVLGAGAWGTALAAHLAVRHDTLLWARDAALVAELAVRRENARYLGGVALPPGLRYEADLATALSHAQADDALCVIAAPVAGLRALCRAMRDARRVPAHFVWVCKGFEADTRRLPHQMVAEELPDHASYGVLSGPSFAREVAQGLPVALTVASASAACRERTLAAFHHGAMRIYTGDDVVGVEVGGAVKNVLAIATGIADGLGLGLNARAALVTRGLAEMSRLGVALGGRAETFTGLTGLGDLILTATGDLSRNRSVGLQLAAGRSLDDILAALGHVAEGVRCARAVLSIARERGVDMPITEAVCAVLFDGVAPRDAVSGLLRRDAKAE.

NADPH is bound by residues Trp11, Arg30, and Lys108. Positions 108, 137, and 139 each coordinate sn-glycerol 3-phosphate. Residue Ala141 participates in NADPH binding. Sn-glycerol 3-phosphate contacts are provided by Lys192, Asp245, Ser255, Arg256, and Asn257. Lys192 functions as the Proton acceptor in the catalytic mechanism. NADPH is bound at residue Arg256. Residues Val280 and Glu282 each contribute to the NADPH site.

The protein belongs to the NAD-dependent glycerol-3-phosphate dehydrogenase family.

The protein localises to the cytoplasm. It catalyses the reaction sn-glycerol 3-phosphate + NAD(+) = dihydroxyacetone phosphate + NADH + H(+). The catalysed reaction is sn-glycerol 3-phosphate + NADP(+) = dihydroxyacetone phosphate + NADPH + H(+). Its pathway is membrane lipid metabolism; glycerophospholipid metabolism. Its function is as follows. Catalyzes the reduction of the glycolytic intermediate dihydroxyacetone phosphate (DHAP) to sn-glycerol 3-phosphate (G3P), the key precursor for phospholipid synthesis. The protein is Glycerol-3-phosphate dehydrogenase [NAD(P)+] of Burkholderia pseudomallei (strain 1710b).